The sequence spans 260 residues: Indole-3-glycerol phosphate synthase (260 aa).

The protein belongs to the TrpC family.

It carries out the reaction 1-(2-carboxyphenylamino)-1-deoxy-D-ribulose 5-phosphate + H(+) = (1S,2R)-1-C-(indol-3-yl)glycerol 3-phosphate + CO2 + H2O. It functions in the pathway amino-acid biosynthesis; L-tryptophan biosynthesis; L-tryptophan from chorismate: step 4/5. This chain is Indole-3-glycerol phosphate synthase, found in Lactiplantibacillus plantarum (strain ATCC BAA-793 / NCIMB 8826 / WCFS1) (Lactobacillus plantarum).